Reading from the N-terminus, the 197-residue chain is Carnitine operon protein CaiE (197 aa).

A disordered region spans residues 177–197 (TAPEANRPRLRGTTEVKPKGQ). Basic and acidic residues predominate over residues 188-197 (GTTEVKPKGQ).

It belongs to the transferase hexapeptide repeat family.

It functions in the pathway amine and polyamine metabolism; carnitine metabolism. In terms of biological role, overproduction of CaiE stimulates the activity of CaiB and CaiD. In Proteus sp. (strain LE138), this protein is Carnitine operon protein CaiE.